A 203-amino-acid chain; its full sequence is Methyltransferase-like 26 (203 aa).

Belongs to the UPF0585 family.

This Xenopus tropicalis (Western clawed frog) protein is Methyltransferase-like 26.